The sequence spans 169 residues: MGRRFLVTVRIQRAGRPLQERVFLVKFVRSRRPRTASCALAFVNMLLRLERILRRGPHRNPGPGDDDGQRSRSSSSAQLRCRFELRGPHYLLPPGARRSAGRLPGHAGGAARVRGSAGCARCLGSPAARLGPRAGTSRHRAIFAFRWVLFVFRWVVFVYRWERRPDRRA.

The segment at Met-1 to Pro-63 is interaction with CDK5RAP3 and MDM2. The disordered stretch occupies residues Arg-54–Ser-73.

As to quaternary structure, does not interact with cyclins, CDK1, CDK2, CDK4, CDK5 or CDK6. Interacts with COMMD1. Binds to BCL6, E2F1, HUWE1, MDM2, MYC, NPM1/B23, TOP1/TOPOI and UBE2I/UBC9. Interacts with TBRG1. Interacts with CDKN2AIP and E4F1. Interacts with CDK5RAP3 and MDM2; form a ternary complex involved in regulation of p53/TP53. Interacts with NOP53; the interaction is direct and promotes ARF nucleoplasmic relocalization and ubiquitin-mediated proteasomal degradation. Interacts with TTF1 (via the N-terminal region (NRD) and a C-terminal region); the interaction is direct and inhibits the nucleolar localization of TTF1. Interacts with C1QBP. Ubiquitinated in normal cells by TRIP12 via the ubiquitin fusion degradation (UFD) pathway, a process that mediates ubiquitination at the N-terminus, regardless of the absence of lysine residues. Ubiquitination leads to its proteasomal degradation. In cancer cells, however, TRIP12 is located in a different cell compartment, preventing ubiquitination and degradation.

Its subcellular location is the nucleus. The protein resides in the nucleolus. It localises to the nucleoplasm. The protein localises to the mitochondrion. Capable of inducing cell cycle arrest in G1 and G2 phases. Acts as a tumor suppressor. Binds to MDM2 and blocks its nucleocytoplasmic shuttling by sequestering it in the nucleolus. This inhibits the oncogenic action of MDM2 by blocking MDM2-induced degradation of p53 and enhancing p53-dependent transactivation and apoptosis. Also induces G2 arrest and apoptosis in a p53-independent manner by preventing the activation of cyclin B1/CDC2 complexes. Binds to BCL6 and down-regulates BCL6-induced transcriptional repression. Binds to E2F1 and MYC and blocks their transcriptional activator activity but has no effect on MYC transcriptional repression. Binds to TOP1/TOPOI and stimulates its activity. This complex binds to rRNA gene promoters and may play a role in rRNA transcription and/or maturation. Interacts with NPM1/B23 and promotes its polyubiquitination and degradation, thus inhibiting rRNA processing. Plays a role in inhibiting ribosome biogenesis, perhaps by binding to the nucleolar localization sequence of transcription termination factor TTF1, and thereby preventing nucleolar localization of TTF1. Interacts with COMMD1 and promotes its 'Lys63'-linked polyubiquitination. Interacts with UBE2I/UBC9 and enhances sumoylation of a number of its binding partners including MDM2 and E2F1. Binds to HUWE1 and represses its ubiquitin ligase activity. May play a role in controlling cell proliferation and apoptosis during mammary gland development. In terms of biological role, may be involved in regulation of autophagy and caspase-independent cell death; the short-lived mitochondrial isoform is stabilized by C1QBP. The polypeptide is Tumor suppressor ARF (Mus musculus (Mouse)).